The following is a 1199-amino-acid chain: Pyruvate-flavodoxin oxidoreductase (1199 aa).

4Fe-4S ferredoxin-type domains are found at residues Glu699 to Tyr728 and Phe755 to Leu784. Residues Cys708, Cys711, Cys714, Cys718, Cys764, Cys767, Cys770, Cys774, Cys838, Cys841, Cys866, and Cys1103 each contribute to the [4Fe-4S] cluster site.

Belongs to the pyruvate:ferredoxin/flavodoxin oxidoreductase family. The cofactor is [4Fe-4S] cluster.

It carries out the reaction oxidized [flavodoxin] + pyruvate + CoA + 2 H(+) = reduced [flavodoxin] + acetyl-CoA + CO2. In terms of biological role, oxidoreductase required for the transfer of electrons from pyruvate to flavodoxin, which reduces nitrogenase. The protein is Pyruvate-flavodoxin oxidoreductase (nifJ) of Nostoc sp. (strain PCC 7120 / SAG 25.82 / UTEX 2576).